A 415-amino-acid chain; its full sequence is MANRNLSESLFKPRQKHQETSTLVKHRDPRLIAGNYSTLDGNSHGSWYRMINRLMWIWREIDPFEIEEVLCRIAMTNAQRSDDNLLDTVIGYRKGNWVFEWSHQAMLWQQRALQAEQIPEASNFWLKAANLYSIAGYPHLKGDELSQQAVILANKAYENAARCSGYQLRKIEFKLKEGGCVTGFLHLPQQLQRPSPTILVCGSLDNLQSDYYRLFRDYLAPLGFAMLTVDMPSIGYSSRLRMTQDTCILHQQIIHQLDEIPWIDHTRIGLFGFRFGANIAVRLAYLESKRIKGVATLGAIVHEWLSSVERQQNSPSMYLDMFASRLGIYNVDEKAFRLELGCYSLKKQGLLGRRCSVPMLAGYWQNDIFSPKEESKLIAMSSMDSQLLAIPTTPVYNSFNKALREISQWLRNKVC.

Residues M1–L23 form a disordered region.

It belongs to the FrsA family.

The enzyme catalyses a carboxylic ester + H2O = an alcohol + a carboxylate + H(+). In terms of biological role, catalyzes the hydrolysis of esters. This Photorhabdus laumondii subsp. laumondii (strain DSM 15139 / CIP 105565 / TT01) (Photorhabdus luminescens subsp. laumondii) protein is Esterase FrsA.